A 149-amino-acid polypeptide reads, in one-letter code: Large ribosomal subunit protein uL15 (149 aa).

Positions 1-57 (MRLNDPKPKTGSQHRRRRVGRGIAAGQGASCGFGMRGQKSRSGRPTRPGFEGGQNPL) are disordered. The span at 23–35 (IAAGQGASCGFGM) shows a compositional bias: gly residues.

Belongs to the universal ribosomal protein uL15 family. Part of the 50S ribosomal subunit.

Functionally, binds to the 23S rRNA. The sequence is that of Large ribosomal subunit protein uL15 from Acaryochloris marina (strain MBIC 11017).